Here is a 99-residue protein sequence, read N- to C-terminus: Nucleoid-associated protein MGAS2096_Spy1605 (99 aa).

The protein belongs to the YbaB/EbfC family. In terms of assembly, homodimer.

The protein localises to the cytoplasm. Its subcellular location is the nucleoid. Its function is as follows. Binds to DNA and alters its conformation. May be involved in regulation of gene expression, nucleoid organization and DNA protection. This is Nucleoid-associated protein MGAS2096_Spy1605 from Streptococcus pyogenes serotype M12 (strain MGAS2096).